A 106-amino-acid polypeptide reads, in one-letter code: MKVDMSTSVKDDAQLEASRVRENPPPMYKVLLLNDDFTPMDFVVQVLQQFFHMNREKATHIMLQVHTQGHGVCGVYTKDVAATKVEQVLQYAKAHQHPLQCVMEEN.

Residues Met1–Val20 are disordered.

It belongs to the ClpS family. Binds to the N-terminal domain of the chaperone ClpA.

Involved in the modulation of the specificity of the ClpAP-mediated ATP-dependent protein degradation. The chain is ATP-dependent Clp protease adapter protein ClpS from Chromobacterium violaceum (strain ATCC 12472 / DSM 30191 / JCM 1249 / CCUG 213 / NBRC 12614 / NCIMB 9131 / NCTC 9757 / MK).